Consider the following 423-residue polypeptide: COP9 signalosome complex subunit 3 (423 aa).

The PCI domain maps to 197-365 (NFERALYFYE…GMVCFHDNPE (169 aa)). Residues 402–423 (QFVQKSMGSQEDDSGTKPSSYS) form a disordered region.

Belongs to the CSN3 family. Component of the CSN complex, probably composed of COPS1, COPS2, COPS3, COPS4, COPS5, COPS6, COPS7, COPS8 and COPS9.

It localises to the cytoplasm. The protein resides in the nucleus. In terms of biological role, component of the COP9 signalosome complex (CSN), a complex involved in various cellular and developmental processes. The CSN complex is an essential regulator of the ubiquitin (Ubl) conjugation pathway by mediating the deneddylation of the cullin subunits of E3 ligase complexes, leading to modify the Ubl ligase activity. In Gallus gallus (Chicken), this protein is COP9 signalosome complex subunit 3 (COPS3).